We begin with the raw amino-acid sequence, 198 residues long: Peptidyl-tRNA hydrolase (198 aa).

Residue Tyr15 participates in tRNA binding. Catalysis depends on His20, which acts as the Proton acceptor. TRNA contacts are provided by Phe66, Asn68, and Asn114.

It belongs to the PTH family. Monomer.

It is found in the cytoplasm. The enzyme catalyses an N-acyl-L-alpha-aminoacyl-tRNA + H2O = an N-acyl-L-amino acid + a tRNA + H(+). Functionally, hydrolyzes ribosome-free peptidyl-tRNAs (with 1 or more amino acids incorporated), which drop off the ribosome during protein synthesis, or as a result of ribosome stalling. Its function is as follows. Catalyzes the release of premature peptidyl moieties from peptidyl-tRNA molecules trapped in stalled 50S ribosomal subunits, and thus maintains levels of free tRNAs and 50S ribosomes. This is Peptidyl-tRNA hydrolase from Cupriavidus necator (strain ATCC 17699 / DSM 428 / KCTC 22496 / NCIMB 10442 / H16 / Stanier 337) (Ralstonia eutropha).